Reading from the N-terminus, the 732-residue chain is MDPSADTWDLFSPLISLWINRFYIYLGFAVSISLWICVQIVIKTQGKNLQEKSVPKAAQDLMTNGYVSLQEKDIFVSGVKIFYGSQTGTAKGFATVLAEAVTSLDLPVAIINLKEYDPDDHLIEEVTSKNVCVFLVATYTDGLPTESAEWFCKWLEEASIDFRFGKTYLKGMRYAVFGLGNSAYASHFNKVGKNVDKWLWMLGAHRVMSRGEGDCDVVKSKHGSIEADFRAWKTKFISQLQALQKGERKKSCGGHCKKGKCESHQHGSEEREEGSHEQDELHHRDTEEEEPFESSSEEEFGGEDHQSLNSIVDVEDLGKIMDHVKKEKREKEQQEEKSGLFRNMGRNEDGERRAMITPALREALTKQGYQLIGSHSGVKLCRWTKSMLRGRGGCYKHTFYGIESHRCMETTPSLACANKCVFCWRHHTNPVGTEWRWKMDQPEMILKEAIENHQNMIKQFKGVPGVKAERFEEGMTVKHCALSLVGEPIMYPEINRFLKLLHQCKISSFLVTNAQFPAEIRNLEPVTQLYVSVDASTKDSLKKIDRPLFKDFWQRFLDSLKALAVKQQRTVYRLTLVKAWNVDELQAYAQLVSLGNPDFIEVKGVTYCGESSASSLTMAHVPWHEEVVQFVHELVDLIPEYEIACEHEHSNCLLIAHRKFKIGGEWWTWIDYNRFQELIQEYEDSGGSKTFSAKDYMARTPHWALFGASERGFDPKDTRHQRKNKSKAISGC.

Residues 79-237 (VKIFYGSQTG…DFRAWKTKFI (159 aa)) enclose the Flavodoxin-like domain. Residues 85–89 (SQTGT) and 176–208 (VFGL…HRVM) each bind FMN. The interval 248-314 (RKKSCGGHCK…HQSLNSIVDV (67 aa)) is disordered. Residues 259–286 (GKCESHQHGSEEREEGSHEQDELHHRDT) are compositionally biased toward basic and acidic residues. Residues 287–301 (EEEEPFESSSEEEFG) show a composition bias toward acidic residues. A Radical SAM core domain is found at 400–644 (YGIESHRCME…VDLIPEYEIA (245 aa)). Positions 416, 420, and 423 each coordinate [4Fe-4S] cluster.

Belongs to the TYW1 family. It depends on [4Fe-4S] cluster as a cofactor.

The enzyme catalyses N(1)-methylguanosine(37) in tRNA(Phe) + pyruvate + S-adenosyl-L-methionine = 4-demethylwyosine(37) in tRNA(Phe) + 5'-deoxyadenosine + L-methionine + CO2 + H2O. It functions in the pathway tRNA modification; wybutosine-tRNA(Phe) biosynthesis. In terms of biological role, probable component of the wybutosine biosynthesis pathway. Wybutosine is a hyper modified guanosine with a tricyclic base found at the 3'-position adjacent to the anticodon of eukaryotic phenylalanine tRNA. Catalyzes the condensation of N-methylguanine with 2 carbon atoms from pyruvate to form the tricyclic 4-demethylwyosine, an intermediate in wybutosine biosynthesis. The protein is S-adenosyl-L-methionine-dependent tRNA 4-demethylwyosine synthase TYW1 (TYW1) of Homo sapiens (Human).